A 2531-amino-acid polypeptide reads, in one-letter code: Putative neurobeachin homolog (2531 aa).

Acidic residues-rich tracts occupy residues 1–10, 26–35, and 62–74; these read MDISETEYND, EDEVNDEESN, and EPSDDQQNVEESE. 4 disordered regions span residues 1–101, 1363–1398, 1420–1440, and 1642–1670; these read MDIS…SPPP, NDGDHASIKNGSDHSENGADEETEEKGEQGQGDNGG, EELKKMHQSNGRRPSTLMPPQ, and RFVPNPYGSRHEEANLPEGEKNEEPEISE. Over residues 1363–1379 the composition is skewed to basic and acidic residues; it reads NDGDHASIKNGSDHSEN. The segment covering 1427 to 1440 has biased composition (polar residues); that stretch reads QSNGRRPSTLMPPQ. Residues 1650–1670 are compositionally biased toward basic and acidic residues; it reads SRHEEANLPEGEKNEEPEISE. A BEACH-type PH domain is found at 1714–1822; that stretch reads PSSQSACFST…TVRKVVYQLP (109 aa). In terms of domain architecture, BEACH spans 1841–2130; that stretch reads MTPRQLFKHS…QLLAEAHPPR (290 aa). WD repeat units lie at residues 2289–2332, 2350–2389, 2429–2468, and 2471–2510; these read GHGD…GFIA, GHEASISALCVSAEHGLVVSGCEDGVILIHTTASDLLRRI, LSEEKIECVTVTRDGEFAVTGAVNGRITIWRMFPLNKLYT, and PLNSAVRSVAVVASHRFILGGLDSGAIVVFNADFNRWHYE.

The protein belongs to the WD repeat neurobeachin family. Interacts with RII subunit of PKA.

It is found in the cytoplasm. Its subcellular location is the membrane. It localises to the nucleus. Its function is as follows. Binds to type II regulatory subunits of protein kinase A and anchors/targets them to the membrane. May anchor the kinase to cytoskeletal and/or organelle-associated proteins. Regulates endosomal traffic in polarized epithelial cells such as the vulval precursor cells and intestinal cells. Thought to act as a negative regulator of lin-12 activity in vulval precursor cells. May have a role in the internalization process from basolateral surface of polarized epithelial cells. This is Putative neurobeachin homolog from Caenorhabditis briggsae.